A 1717-amino-acid chain; its full sequence is DNA-directed RNA polymerase I subunit RPA1 (1717 aa).

Zn(2+) contacts are provided by Cys-64, Cys-67, Cys-74, His-77, Cys-104, and Cys-107. Residues 110 to 201 (LTCPRAAIYL…VAQFWKTHMA (92 aa)) are clamp. Zn(2+)-binding residues include Cys-205 and Cys-208. Positions 327-433 (FTNGQTVNLQ…IRQILEKKEG (107 aa)) are clamp. Residues 410–423 (DSEMDKLMLEKYPG) are rudder. The DNA site is built by Lys-431, Arg-436, and Arg-443. The tract at residues 475-549 (YPQPVTPWNV…QGTKVVCRHV (75 aa)) is involved in RRN3 binding to Pol I complex. Arg-559 serves as a coordination point for RNA. Mg(2+) contacts are provided by Asp-595, Asp-597, and Asp-599. Position 599 (Asp-599) interacts with RNA. The segment at 812-890 (KPNADVVRQR…NEINKACMPL (79 aa)) is funnel. Positions 967 to 1008 (RPPEFFFHCMAGREGLVDTAVKTSRSGYLQRCIIKHLEGLVI) are bridging helix. The tract at residues 1067–1162 (ADPQKVLGHI…SLSVWRPDIY (96 aa)) is mediates the interaction with TOP2A. The interval 1214-1255 (PGEAVGLLAAQSIGEPSTQMTLNTFHFAGRGEMNVTLGIPRL) is trigger loop. Arg-1256 is a binding site for DNA. Residues 1372 to 1493 (RNVNSRRATQ…RRHSRPQGAE (122 aa)) form a disordered region. Residues 1380–1397 (TQKDLNDTEDSGRSQREE) are compositionally biased toward basic and acidic residues. Ser-1393 bears the Phosphoserine mark. Composition is skewed to acidic residues over residues 1398–1419 (ERDE…DADA) and 1429–1450 (EEEV…EVQE). Positions 1452-1464 (GNIKGDGVHQGHE) are enriched in basic and acidic residues. A compositionally biased stretch (acidic residues) spans 1465 to 1477 (PDEEEHLGLEEEE).

The protein belongs to the RNA polymerase beta' chain family. In terms of assembly, component of the RNA polymerase I (Pol I) complex consisting of 13 subunits: a ten-subunit catalytic core composed of POLR1A/RPA1, POLR1B/RPA2, POLR1C/RPAC1, POLR1D/RPAC2, POLR1H/RPA12, POLR2E/RPABC1, POLR2F/RPABC2, POLR2H/RPABC3, POLR2K/RPABC4 and POLR2L/RPABC5; a mobile stalk subunit POLR1F/RPA43 protruding from the core and additional subunits homologous to general transcription factors POLR1E/RPA49 and POLR1G/RPA34. Part of Pol I pre-initiation complex (PIC), in which Pol I core assembles with RRN3 and promoter-bound UTBF and SL1/TIF-IB complex. Interacts (via dock II domain) with TOP2A; this interaction may assist Pol I transcription initiation by releasing supercoils occurring during DNA unwinding. Interacts with CAVIN1; this interaction induces the dissociation of Pol I complex paused at rDNA terminator sequences. Interacts with MYO1C. Interacts with ERBB2. Interacts with DDX11. Interacts with RECQL5. Mg(2+) serves as cofactor. In terms of processing, phosphorylated.

It localises to the nucleus. The protein localises to the nucleolus. Its subcellular location is the chromosome. The catalysed reaction is RNA(n) + a ribonucleoside 5'-triphosphate = RNA(n+1) + diphosphate. In terms of biological role, catalytic core component of RNA polymerase I (Pol I), a DNA-dependent RNA polymerase which synthesizes ribosomal RNA precursors using the four ribonucleoside triphosphates as substrates. Transcribes 47S pre-rRNAs from multicopy rRNA gene clusters, giving rise to 5.8S, 18S and 28S ribosomal RNAs. Pol I-mediated transcription cycle proceeds through transcription initiation, transcription elongation and transcription termination stages. During transcription initiation, Pol I pre-initiation complex (PIC) is recruited by the selectivity factor 1 (SL1/TIF-IB) complex bound to the core promoter that precedes an rDNA repeat unit. The PIC assembly bends the promoter favoring the formation of the transcription bubble and promoter escape. Once the polymerase has escaped from the promoter it enters the elongation phase during which RNA is actively polymerized, based on complementarity with the template DNA strand. Highly processive, assembles in structures referred to as 'Miller trees' where many elongating Pol I complexes queue and transcribe the same rDNA coding regions. At terminator sequences downstream of the rDNA gene, PTRF interacts with Pol I and halts Pol I transcription leading to the release of the RNA transcript and polymerase from the DNA. Forms Pol I active center together with the second largest subunit POLR1B/RPA2. Appends one nucleotide at a time to the 3' end of the nascent RNA, with POLR1A/RPA1 contributing a Mg(2+)-coordinating DxDGD motif, and POLR1B/RPA2 participating in the coordination of a second Mg(2+) ion and providing lysine residues believed to facilitate Watson-Crick base pairing between the incoming nucleotide and the template base. Typically, Mg(2+) ions direct a 5' nucleoside triphosphate to form a phosphodiester bond with the 3' hydroxyl of the preceding nucleotide of the nascent RNA, with the elimination of pyrophosphate. Has proofreading activity: Pauses and backtracks to allow the cleavage of a missincorporated nucleotide via POLR1H/RPA12. High Pol I processivity is associated with decreased transcription fidelity. The polypeptide is DNA-directed RNA polymerase I subunit RPA1 (Mus musculus (Mouse)).